Reading from the N-terminus, the 127-residue chain is Small ribosomal subunit protein uS11 (127 aa).

This sequence belongs to the universal ribosomal protein uS11 family. In terms of assembly, part of the 30S ribosomal subunit. Interacts with proteins S7 and S18. Binds to IF-3.

Functionally, located on the platform of the 30S subunit, it bridges several disparate RNA helices of the 16S rRNA. Forms part of the Shine-Dalgarno cleft in the 70S ribosome. This chain is Small ribosomal subunit protein uS11, found in Streptococcus suis (strain 98HAH33).